The chain runs to 394 residues: Nuclear pore glycoprotein p62 (394 aa).

Repeat copies occupy residues 22–23, 50–51, 75–76, 77–78, and 116–117. A 5 X 2 AA repeats of F-G region spans residues 22-117; that stretch reads FGLSTGTPAA…GTSAAPPAFG (96 aa). A compositionally biased stretch (low complexity) spans 45-57; it reads KTTFSFGTPAPTA. Residues 45–73 are disordered; sequence KTTFSFGTPAPTAGIGGGDADNSKAQAPP. The stretch at 211–341 forms a coiled coil; that stretch reads SYHQLEEHIN…DNLNEANKGQ (131 aa).

This sequence belongs to the nucleoporin NSP1/NUP62 family. As to expression, expressed in adult male accessory glands (at protein level).

The protein resides in the nucleus. It localises to the chromosome. It is found in the nucleus envelope. Its subcellular location is the nuclear pore complex. The protein localises to the cytoplasm. The protein resides in the cytoskeleton. It localises to the spindle pole. It is found in the microtubule organizing center. Its subcellular location is the centrosome. Its function is as follows. Essential component of the nuclear pore complex. The N-terminal is probably involved in nucleocytoplasmic transport. The C-terminal is involved in protein-protein interaction probably via coiled-coil formation, promotes its association with centrosomes and may function in anchorage of Nup62 to the pore complex. Binds to transcriptionally active genes. Negatively regulates chromatin attachment to the nuclear envelope, probably by preventing chromatin tethering by Nup154. The chain is Nuclear pore glycoprotein p62 from Drosophila melanogaster (Fruit fly).